A 704-amino-acid chain; its full sequence is CAP-Gly domain-containing linker protein 4 (704 aa).

3 ANK repeats span residues 65–101 (TSVS…NVND), 149–180 (TNMN…DVDA), and 186–215 (NFGT…NPAF). Residues 303–345 (GTTEFASGQWAGIELDEPEGKNNGSVGRVQYFKCAPKYGIFAP) form the CAP-Gly 1 domain. Positions 353 to 479 (KDGRKTTTHT…SATSAANNSH (127 aa)) are disordered. Low complexity-rich tracts occupy residues 360–371 (THTPSTRATPHA), 423–432 (SMSSSSSSSS), and 440–461 (PKKL…SLPS). The CAP-Gly 2 domain occupies 504–546 (GTTNFAPGYWYGIELEKPHGKNDGSVGGVQYFSCSPRYGIFAP). Phosphoserine is present on residues Ser556 and Ser608. The CAP-Gly 3 domain maps to 643–685 (GPTDFASGIWLGLELRSAKGKNDGAVGDKRYFTCKPNYGVLVR).

The sequence is that of CAP-Gly domain-containing linker protein 4 (Clip4) from Mus musculus (Mouse).